Reading from the N-terminus, the 428-residue chain is Dihydroorotase (428 aa).

The Zn(2+) site is built by H59 and H61. Substrate is bound by residues 61 to 63 (HLR) and N93. Residues D151, H178, and H231 each contribute to the Zn(2+) site. Position 277 (N277) interacts with substrate. D304 contributes to the Zn(2+) binding site. D304 is a catalytic residue. Residues H308 and 322-323 (FG) each bind substrate.

It belongs to the metallo-dependent hydrolases superfamily. DHOase family. Class I DHOase subfamily. Zn(2+) serves as cofactor.

The catalysed reaction is (S)-dihydroorotate + H2O = N-carbamoyl-L-aspartate + H(+). The protein operates within pyrimidine metabolism; UMP biosynthesis via de novo pathway; (S)-dihydroorotate from bicarbonate: step 3/3. Catalyzes the reversible cyclization of carbamoyl aspartate to dihydroorotate. The sequence is that of Dihydroorotase from Bacillus cereus (strain G9842).